Here is a 676-residue protein sequence, read N- to C-terminus: Pre-mRNA-splicing factor CLF1 (676 aa).

16 HAT repeats span residues 46-78, 80-112, 114-146, 148-179, 181-212, 215-255, 257-291, 301-333, 336-369, 379-415, 417-449, 451-483, 485-519, 521-553, 576-614, and 620-652; these read EYQG…WELE, REFA…CELK, KNIN…TEET, GNIA…MEKR, REFD…FEME, NRDT…FETR, REYE…FEKQ, VVLT…LGQE, LEAD…LWIK, KEVE…FEIR, GNLP…LEAK, REFD…LEQM, GDEE…FEAE, ENYD…FEVT, EAKA…FEEE, and SKAD…YVFP. A compositionally biased stretch (basic and acidic residues) spans 616-628; that stretch reads GDDKSKADLDKRK. The segment at 616–636 is disordered; sequence GDDKSKADLDKRKPTPVKKKR.

The protein belongs to the crooked-neck family. In terms of assembly, associated with the spliceosome.

It is found in the nucleus. Its function is as follows. Involved in pre-mRNA splicing and cell cycle progression. Required for the spliceosome assembly and initiation of the DNA replication. In Yarrowia lipolytica (strain CLIB 122 / E 150) (Yeast), this protein is Pre-mRNA-splicing factor CLF1 (CLF1).